Here is a 232-residue protein sequence, read N- to C-terminus: Phosphatidylserine decarboxylase proenzyme (232 aa).

Residue Ser-190 is the Schiff-base intermediate with substrate; via pyruvic acid of the active site. Residue Ser-190 is modified to Pyruvic acid (Ser); by autocatalysis.

This sequence belongs to the phosphatidylserine decarboxylase family. PSD-A subfamily. As to quaternary structure, heterodimer of a large membrane-associated beta subunit and a small pyruvoyl-containing alpha subunit. Pyruvate is required as a cofactor. Post-translationally, is synthesized initially as an inactive proenzyme. Formation of the active enzyme involves a self-maturation process in which the active site pyruvoyl group is generated from an internal serine residue via an autocatalytic post-translational modification. Two non-identical subunits are generated from the proenzyme in this reaction, and the pyruvate is formed at the N-terminus of the alpha chain, which is derived from the carboxyl end of the proenzyme. The post-translation cleavage follows an unusual pathway, termed non-hydrolytic serinolysis, in which the side chain hydroxyl group of the serine supplies its oxygen atom to form the C-terminus of the beta chain, while the remainder of the serine residue undergoes an oxidative deamination to produce ammonia and the pyruvoyl prosthetic group on the alpha chain.

The protein localises to the cell membrane. The catalysed reaction is a 1,2-diacyl-sn-glycero-3-phospho-L-serine + H(+) = a 1,2-diacyl-sn-glycero-3-phosphoethanolamine + CO2. Its pathway is phospholipid metabolism; phosphatidylethanolamine biosynthesis; phosphatidylethanolamine from CDP-diacylglycerol: step 2/2. Catalyzes the formation of phosphatidylethanolamine (PtdEtn) from phosphatidylserine (PtdSer). The protein is Phosphatidylserine decarboxylase proenzyme of Rhizobium etli (strain ATCC 51251 / DSM 11541 / JCM 21823 / NBRC 15573 / CFN 42).